A 358-amino-acid polypeptide reads, in one-letter code: Acyl-CoA desaturase 1 (358 aa).

Residues 1 to 71 are Cytoplasmic-facing; that stretch reads MPAHMLQEIS…EGPPPKLEYV (71 aa). A compositionally biased stretch (low complexity) spans 8-24; that stretch reads EISSSYTTTTTITEPPS. Positions 8-33 are disordered; that stretch reads EISSSYTTTTTITEPPSGNLQNGREK. The helical transmembrane segment at 72–92 threads the bilayer; it reads WRNIILMALLHVGALYGITLI. Position 74 (Asn74) interacts with substrate. Over 93-96 the chain is Lumenal; sequence PSSK. The chain crosses the membrane as a helical span at residues 97–117; the sequence is VYTLLWGIFYYLISALGITAG. The Cytoplasmic segment spans residues 118–216; the sequence is AHRLWSHRTY…EKLVMFQRRY (99 aa). Fe cation contacts are provided by His119 and His124. The short motif at 119 to 124 is the Histidine box-1 element; sequence HRLWSH. Substrate-binding residues include Asn147, Arg154, and Asp155. The Fe cation site is built by His156, His159, and His160. Positions 156–160 match the Histidine box-2 motif; sequence HRAHH. Substrate-binding residues include Arg187 and Lys188. The helical transmembrane segment at 217–236 threads the bilayer; it reads YKPGLLLMCFILPTLVPWYC. Residues 237–240 are Lumenal-facing; that stretch reads WGET. Residues 241–262 form a helical membrane-spanning segment; sequence FLHSLFVSTFLRYTLVLNATWL. Trp261 lines the substrate pocket. Topologically, residues 263 to 358 are cytoplasmic; the sequence is VNSAAHLYGY…RTGDGSHKSS (96 aa). 4 residues coordinate Fe cation: His268, His297, His300, and His301. The Histidine box-3 signature appears at 297 to 301; sequence HNYHH.

The protein belongs to the fatty acid desaturase type 1 family. It depends on Fe(2+) as a cofactor. Detected in liver (at protein level). Detected in adipose tissue. Detected in liver when rats are kept on a fat-free diet, but not when their food contains unsaturated fatty acids.

It localises to the endoplasmic reticulum membrane. Its subcellular location is the membrane. It catalyses the reaction octadecanoyl-CoA + 2 Fe(II)-[cytochrome b5] + O2 + 2 H(+) = (9Z)-octadecenoyl-CoA + 2 Fe(III)-[cytochrome b5] + 2 H2O. Stearoyl-CoA desaturase that utilizes O(2) and electrons from reduced cytochrome b5 to introduce the first double bond into saturated fatty acyl-CoA substrates. Catalyzes the insertion of a cis double bond at the Delta-9 position into fatty acyl-CoA substrates including palmitoyl-CoA and stearoyl-CoA. Gives rise to a mixture of 16:1 and 18:1 unsaturated fatty acids. Plays an important role in lipid biosynthesis. Plays an important role in regulating the expression of genes that are involved in lipogenesis and in regulating mitochondrial fatty acid oxidation. Plays an important role in body energy homeostasis. Contributes to the biosynthesis of membrane phospholipids, cholesterol esters and triglycerides. Required for normal development of sebaceous glands. Required for the biosynthesis of normal levels of Delta-9 unsaturated fatty acids and 1-alkyl-2,3-diacylglycerol in the Harderian gland. Required for normal production of meibum, an oily material that prevents drying of the cornea. The chain is Acyl-CoA desaturase 1 (Scd1) from Rattus norvegicus (Rat).